The chain runs to 81 residues: Small ribosomal subunit protein bS18 (81 aa).

This sequence belongs to the bacterial ribosomal protein bS18 family. In terms of assembly, part of the 30S ribosomal subunit. Forms a tight heterodimer with protein bS6.

Binds as a heterodimer with protein bS6 to the central domain of the 16S rRNA, where it helps stabilize the platform of the 30S subunit. The protein is Small ribosomal subunit protein bS18 of Syntrophobacter fumaroxidans (strain DSM 10017 / MPOB).